The sequence spans 289 residues: Glycine--tRNA ligase alpha subunit (289 aa).

The protein belongs to the class-II aminoacyl-tRNA synthetase family. Tetramer of two alpha and two beta subunits.

The protein localises to the cytoplasm. It catalyses the reaction tRNA(Gly) + glycine + ATP = glycyl-tRNA(Gly) + AMP + diphosphate. The chain is Glycine--tRNA ligase alpha subunit from Prochlorococcus marinus (strain MIT 9515).